Here is a 273-residue protein sequence, read N- to C-terminus: Progestin and adipoQ receptor family member 4 (273 aa).

A run of 5 helical transmembrane segments spans residues 52–72, 79–99, 115–135, 185–205, and 245–265; these read IYTHGLALLGFLVLVPMTMPW, GWLGGTHCVACLVPPAASVLY, LLALDMCGVCLVNTLGALPII, LLVFGARGVGLGSGAPGSLPC, and LLSVGSILQLHAGVVPDLLWA.

Belongs to the ADIPOR family. Interacts with CERS2 and CERS5; the interaction regulates CERS2 and CERS5 stabilities and activities and is inhibited in presence of ceramides. As to expression, expressed in adipose tissue.

It is found in the golgi apparatus membrane. Functionally, plays a role in maintaining adipose tissue function through the regulation of ceramide levels. Mediates the stability of ceramide synthetases, CERS2 and CERS5, and their activities. In Mus musculus (Mouse), this protein is Progestin and adipoQ receptor family member 4.